Consider the following 129-residue polypeptide: Ropporin-1 (129 aa).

Residues 11-34 (PELPELLKTQPPDLIQWAAEYFGA) form the RIIa domain.

It belongs to the ropporin family. In terms of assembly, homodimer. Interacts with AKAP3. May interact with SPA17. Interacts with RHPN1. Interacts with FSCB; the interaction increases upon spermatozoa capacitation conditions. Interacts with CFAP61. In terms of processing, sumoylated, sumoylation decreases upon spermatozoa capacitation conditions.

The protein resides in the cell projection. It is found in the cilium. Its subcellular location is the flagellum. Its function is as follows. Important for male fertility. With ROPN1L, involved in fibrous sheath integrity and sperm motility, plays a role in PKA-dependent signaling processes required for spermatozoa capacitation. This Mesocricetus auratus (Golden hamster) protein is Ropporin-1.